A 455-amino-acid chain; its full sequence is Phosphoglucosamine mutase (455 aa).

The active-site Phosphoserine intermediate is the Ser-108. Residues Ser-108, Asp-246, Asp-248, and Asp-250 each contribute to the Mg(2+) site. Ser-108 carries the phosphoserine modification.

It belongs to the phosphohexose mutase family. It depends on Mg(2+) as a cofactor. In terms of processing, activated by phosphorylation.

It carries out the reaction alpha-D-glucosamine 1-phosphate = D-glucosamine 6-phosphate. Catalyzes the conversion of glucosamine-6-phosphate to glucosamine-1-phosphate. This chain is Phosphoglucosamine mutase, found in Frankia casuarinae (strain DSM 45818 / CECT 9043 / HFP020203 / CcI3).